The chain runs to 99 residues: Ubiquitin-related modifier 1 (99 aa).

A 1-thioglycine modification is found at Gly99. Gly99 participates in a covalent cross-link: Glycyl lysine isopeptide (Gly-Lys) (interchain with K-? in acceptor proteins).

Belongs to the URM1 family. Homodimer; homodimerization may provide an autoprotection to the highly active C-terminal residue before attacking its substrates. Interacts with NCS2 and NCS6. Forms a conjugate with the target protein AHP1. In terms of processing, C-terminal thiocarboxylation occurs in 2 steps, it is first acyl-adenylated (-COAMP) via the hesA/moeB/thiF part of UBA4, then thiocarboxylated (-COSH) via the rhodanese domain of UBA4.

The protein resides in the cytoplasm. Its subcellular location is the nucleus. The protein operates within tRNA modification; 5-methoxycarbonylmethyl-2-thiouridine-tRNA biosynthesis. In terms of biological role, acts as a sulfur carrier required for 2-thiolation of mcm(5)S(2)U at tRNA wobble positions of cytosolic tRNA(Lys), tRNA(Glu) and tRNA(Gln). Serves as sulfur donor in tRNA 2-thiolation reaction by being thiocarboxylated (-COSH) at its C-terminus by the MOCS3 homolog UBA4. The sulfur is then transferred to tRNA to form 2-thiolation of mcm(5)S(2)U. Prior mcm(5) tRNA modification by the elongator complex is required for 2-thiolation. Also acts as a ubiquitin-like protein (UBL) that is covalently conjugated via an isopeptide bond to lysine residues of target proteins such as AHP1. The thiocarboxylated form serves as substrate for conjugation and oxidative stress specifically induces the formation of UBL-protein conjugates. This Saccharomyces cerevisiae (strain RM11-1a) (Baker's yeast) protein is Ubiquitin-related modifier 1.